A 436-amino-acid chain; its full sequence is Adenosylmethionine-8-amino-7-oxononanoate aminotransferase (436 aa).

W56 lines the substrate pocket. 114 to 115 (GS) is a binding site for pyridoxal 5'-phosphate. Y148 serves as a coordination point for substrate. Pyridoxal 5'-phosphate is bound at residue D245. The substrate site is built by K274, S309, and R400. K274 is modified (N6-(pyridoxal phosphate)lysine).

Belongs to the class-III pyridoxal-phosphate-dependent aminotransferase family. BioA subfamily. Homodimer. Pyridoxal 5'-phosphate serves as cofactor.

It is found in the cytoplasm. It carries out the reaction (8S)-8-amino-7-oxononanoate + S-adenosyl-L-methionine = S-adenosyl-4-methylsulfanyl-2-oxobutanoate + (7R,8S)-7,8-diammoniononanoate. The protein operates within cofactor biosynthesis; biotin biosynthesis; 7,8-diaminononanoate from 8-amino-7-oxononanoate (SAM route): step 1/1. Catalyzes the transfer of the alpha-amino group from S-adenosyl-L-methionine (SAM) to 7-keto-8-aminopelargonic acid (KAPA) to form 7,8-diaminopelargonic acid (DAPA). It is the only aminotransferase known to utilize SAM as an amino donor. The sequence is that of Adenosylmethionine-8-amino-7-oxononanoate aminotransferase from Helicobacter pylori (strain ATCC 700392 / 26695) (Campylobacter pylori).